The following is a 764-amino-acid chain: Semaphorin-3D (764 aa).

Residues 1–41 (MKTAGEPDRRRQRRQVRTGRFSCAWWSTSVMLFFSLPEGNC) form the signal peptide. One can recognise a Sema domain in the interval 48–535 (RVKLGYKDLI…GSDGLVQVSL (488 aa)). A disulfide bridge links cysteine 121 with cysteine 132. N-linked (GlcNAc...) asparagine glycosylation is present at asparagine 143. Cystine bridges form between cysteine 150–cysteine 159, cysteine 290–cysteine 402, and cysteine 314–cysteine 362. The N-linked (GlcNAc...) asparagine glycan is linked to asparagine 490. Cysteine 538 and cysteine 556 are oxidised to a cystine. A glycan (N-linked (GlcNAc...) asparagine) is linked at asparagine 610. In terms of domain architecture, Ig-like C2-type spans 661 to 740 (GDAGSYFCTS…EYCETMWHRE (80 aa)). A disulfide bridge connects residues cysteine 668 and cysteine 733. Residues 743–764 (QKQKGKWKHVQELRKSRNRRHH) are disordered.

Belongs to the semaphorin family.

It is found in the secreted. Its function is as follows. May play a role in the guidance of several axon pathways. This is Semaphorin-3D (sema3d) from Danio rerio (Zebrafish).